Consider the following 252-residue polypeptide: Triosephosphate isomerase (252 aa).

10 to 12 (NWK) serves as a coordination point for substrate. H96 acts as the Electrophile in catalysis. E168 acts as the Proton acceptor in catalysis. Substrate contacts are provided by residues G174, S214, and 235–236 (GG).

The protein belongs to the triosephosphate isomerase family. In terms of assembly, homodimer.

It is found in the cytoplasm. The catalysed reaction is D-glyceraldehyde 3-phosphate = dihydroxyacetone phosphate. Its pathway is carbohydrate biosynthesis; gluconeogenesis. It functions in the pathway carbohydrate degradation; glycolysis; D-glyceraldehyde 3-phosphate from glycerone phosphate: step 1/1. Involved in the gluconeogenesis. Catalyzes stereospecifically the conversion of dihydroxyacetone phosphate (DHAP) to D-glyceraldehyde-3-phosphate (G3P). The polypeptide is Triosephosphate isomerase (Lactobacillus delbrueckii subsp. bulgaricus (strain ATCC 11842 / DSM 20081 / BCRC 10696 / JCM 1002 / NBRC 13953 / NCIMB 11778 / NCTC 12712 / WDCM 00102 / Lb 14)).